The primary structure comprises 505 residues: RNA-splicing ligase RtcB homolog (505 aa).

4 residues coordinate Mn(2+): Asp-119, Cys-122, His-227, and His-259. 226–230 (NHYAE) is a binding site for GMP. Position 300 is a phosphoserine (Ser-300). A Mn(2+)-binding site is contributed by His-353. GMP contacts are provided by residues 353–354 (HN), 402–405 (GGTM), Ser-409, and 428–431 (HGAG). His-428 (GMP-histidine intermediate) is an active-site residue. A Glycyl lysine isopeptide (Lys-Gly) (interchain with G-Cter in SUMO2) cross-link involves residue Lys-496. Lys-504 is a GMP binding site.

This sequence belongs to the RtcB family. In terms of assembly, catalytic component of the tRNA-splicing ligase complex. The cofactor is Mn(2+).

It localises to the nucleus. It is found in the cytoplasm. It carries out the reaction a 3'-end 3'-phospho-ribonucleotide-RNA + a 5'-end dephospho-ribonucleoside-RNA + GTP = a ribonucleotidyl-ribonucleotide-RNA + GMP + diphosphate. It catalyses the reaction a 3'-end 2',3'-cyclophospho-ribonucleotide-RNA + a 5'-end dephospho-ribonucleoside-RNA + GTP + H2O = a ribonucleotidyl-ribonucleotide-RNA + GMP + diphosphate + H(+). In terms of biological role, catalytic subunit of the tRNA-splicing ligase complex that acts by directly joining spliced tRNA halves to mature-sized tRNAs by incorporating the precursor-derived splice junction phosphate into the mature tRNA as a canonical 3',5'-phosphodiester. May act as an RNA ligase with broad substrate specificity, and may function toward other RNAs. This Macaca fascicularis (Crab-eating macaque) protein is RNA-splicing ligase RtcB homolog.